The following is a 67-amino-acid chain: Beta-defensin 103A (67 aa).

An N-terminal signal peptide occupies residues 1-22 (MRIHFLLFALLFLFLMPVPGNG). 3 disulfide bridges follow: Cys33–Cys62, Cys40–Cys55, and Cys45–Cys63.

It belongs to the beta-defensin family.

The protein localises to the secreted. Functionally, exhibits antimicrobial activity against Gram-positive and Gram-negative bacteria. This chain is Beta-defensin 103A (DEFB103A), found in Equus caballus (Horse).